The sequence spans 122 residues: Large ribosomal subunit protein uL18 (122 aa).

It belongs to the universal ribosomal protein uL18 family. In terms of assembly, part of the 50S ribosomal subunit; part of the 5S rRNA/L5/L18/L25 subcomplex. Contacts the 5S and 23S rRNAs.

Its function is as follows. This is one of the proteins that bind and probably mediate the attachment of the 5S RNA into the large ribosomal subunit, where it forms part of the central protuberance. The sequence is that of Large ribosomal subunit protein uL18 from Synechococcus sp. (strain JA-2-3B'a(2-13)) (Cyanobacteria bacterium Yellowstone B-Prime).